Reading from the N-terminus, the 273-residue chain is MEHIARFFFGVSGNVIALFLFLSPVVTFWRIIKKRSTEDFSGVPYNMTLLNCLLSAWYGLPFVSPNNILVTTINGTGSVIEAIYVVIFLIFAERKARLKMMGLLGLVTSIFTMVVLVSLLALHGQGRKLFCGLAATIFSICMYASPLSIMRLVIKTKSVEFMPFLLSLSVFLCGTSWFIYGLLGRDPFIAIPNGCGSFLGLMQLILYAIYRNHKGATPAAAAGKGDAADEVEDAKKAAAAVEMADAKTNKVVADDADADADGKSADDKVASQV.

Topologically, residues 1–6 (MEHIAR) are extracellular. Residues 7 to 27 (FFFGVSGNVIALFLFLSPVVT) traverse the membrane as a helical segment. Positions 7–95 (FFFGVSGNVI…VIFLIFAERK (89 aa)) constitute a MtN3/slv 1 domain. Residues 28-42 (FWRIIKKRSTEDFSG) are Cytoplasmic-facing. The helical transmembrane segment at 43–63 (VPYNMTLLNCLLSAWYGLPFV) threads the bilayer. At 64-71 (SPNNILVT) the chain is on the extracellular side. A helical membrane pass occupies residues 72 to 92 (TINGTGSVIEAIYVVIFLIFA). Over 93–101 (ERKARLKMM) the chain is Cytoplasmic. A helical membrane pass occupies residues 102 to 122 (GLLGLVTSIFTMVVLVSLLAL). The Extracellular segment spans residues 123–128 (HGQGRK). The helical transmembrane segment at 129-149 (LFCGLAATIFSICMYASPLSI) threads the bilayer. The region spanning 131-214 (CGLAATIFSI…ILYAIYRNHK (84 aa)) is the MtN3/slv 2 domain. The Cytoplasmic portion of the chain corresponds to 150–163 (MRLVIKTKSVEFMP). Residues 164-184 (FLLSLSVFLCGTSWFIYGLLG) traverse the membrane as a helical segment. Topologically, residues 185 to 188 (RDPF) are extracellular. A helical membrane pass occupies residues 189–209 (IAIPNGCGSFLGLMQLILYAI). Over 210–273 (YRNHKGATPA…SADDKVASQV (64 aa)) the chain is Cytoplasmic.

It belongs to the SWEET sugar transporter family. In terms of assembly, forms homooligomers and/or heterooligomers.

It localises to the cell membrane. Its function is as follows. Mediates both low-affinity uptake and efflux of sugar across the plasma membrane. This chain is Bidirectional sugar transporter SWEET1a (SWEET1A), found in Oryza sativa subsp. japonica (Rice).